The primary structure comprises 405 residues: Phosphopentomutase (405 aa).

6 residues coordinate Mn(2+): Asp10, Asp297, His302, Asp338, His339, and His350.

Belongs to the phosphopentomutase family. Requires Mn(2+) as cofactor.

It is found in the cytoplasm. The enzyme catalyses 2-deoxy-alpha-D-ribose 1-phosphate = 2-deoxy-D-ribose 5-phosphate. It carries out the reaction alpha-D-ribose 1-phosphate = D-ribose 5-phosphate. Its pathway is carbohydrate degradation; 2-deoxy-D-ribose 1-phosphate degradation; D-glyceraldehyde 3-phosphate and acetaldehyde from 2-deoxy-alpha-D-ribose 1-phosphate: step 1/2. In terms of biological role, isomerase that catalyzes the conversion of deoxy-ribose 1-phosphate (dRib-1-P) and ribose 1-phosphate (Rib-1-P) to deoxy-ribose 5-phosphate (dRib-5-P) and ribose 5-phosphate (Rib-5-P), respectively. This is Phosphopentomutase from Pseudoalteromonas translucida (strain TAC 125).